The following is a 116-amino-acid chain: NADH-ubiquinone oxidoreductase chain 3 (116 aa).

A run of 3 helical transmembrane segments spans residues 8-28 (VVAT…LPSL), 56-76 (FFLI…LLPL), and 88-108 (TLLW…YEWF).

Belongs to the complex I subunit 3 family.

It localises to the mitochondrion membrane. The enzyme catalyses a ubiquinone + NADH + 5 H(+)(in) = a ubiquinol + NAD(+) + 4 H(+)(out). Core subunit of the mitochondrial membrane respiratory chain NADH dehydrogenase (Complex I) that is believed to belong to the minimal assembly required for catalysis. Complex I functions in the transfer of electrons from NADH to the respiratory chain. The immediate electron acceptor for the enzyme is believed to be ubiquinone. This is NADH-ubiquinone oxidoreductase chain 3 (MT-ND3) from Scyliorhinus canicula (Small-spotted catshark).